Reading from the N-terminus, the 204-residue chain is uncharacterized protein (204 aa).

The disordered stretch occupies residues 77 to 111 (APHGSRIPGRCRRSPRCSRRPGGSRLRGGTWTPRL). The span at 85-95 (GRCRRSPRCSR) shows a compositional bias: basic residues. Residues 96-105 (RPGGSRLRGG) show a composition bias toward low complexity.

This is an uncharacterized protein from Homo sapiens (Human).